The chain runs to 287 residues: Uroplakin-3a (287 aa).

The first 18 residues, 1-18, serve as a signal peptide directing secretion; the sequence is MPPLWVVLALGCLRLGSG. Residues 19–207 lie on the Lumenal side of the membrane; that stretch reads VNLQPQLASV…DTWPGRRSGG (189 aa). N-linked (GlcNAc...) asparagine glycans are attached at residues asparagine 74, asparagine 139, and asparagine 170. A helical membrane pass occupies residues 208-235; it reads MIVITSILGSLPFFLLIGFAGAIVLSLV. Residues 236–287 lie on the Cytoplasmic side of the membrane; sequence DRGDADGATSHDSQITQEAVPKSLGTSEPSYTSVNRGPSLDRAEVYASKLQD. Positions 243–274 are disordered; sequence ATSHDSQITQEAVPKSLGTSEPSYTSVNRGPS. Polar residues predominate over residues 259 to 271; that stretch reads LGTSEPSYTSVNR.

This sequence belongs to the uroplakin-3 family. As to quaternary structure, heterodimer with uroplakin-1B (UPK1B). In terms of tissue distribution, bladder epithelium.

Its subcellular location is the endoplasmic reticulum membrane. In terms of biological role, component of the asymmetric unit membrane (AUM); a highly specialized biomembrane elaborated by terminally differentiated urothelial cells. May play an important role in AUM-cytoskeleton interaction in terminally differentiated urothelial cells. It also contributes to the formation of urothelial glycocalyx which may play an important role in preventing bacterial adherence. The chain is Uroplakin-3a (UPK3A) from Bos taurus (Bovine).